A 289-amino-acid polypeptide reads, in one-letter code: (+)-kolavelool synthase (289 aa).

Belongs to the diterpene synthase family.

It catalyses the reaction (+)-kolavenyl diphosphate + H2O = (+)-kolavelool + diphosphate. Functionally, involved in the biosynthesis of (+)-O-methylkolavelool. Catalyzes the biosynthesis of (+)-kolavelool from (+)-kolavenyl diphosphate via the release of the diphosphate moiety through the nucleophilic addition of a water molecule. This Herpetosiphon aurantiacus (strain ATCC 23779 / DSM 785 / 114-95) protein is (+)-kolavelool synthase.